Reading from the N-terminus, the 66-residue chain is Large ribosomal subunit protein bL33 (66 aa).

It belongs to the bacterial ribosomal protein bL33 family.

In Wolbachia sp. subsp. Brugia malayi (strain TRS), this protein is Large ribosomal subunit protein bL33.